A 452-amino-acid polypeptide reads, in one-letter code: MELSRRICLVRLWLLLLSFLLGFSAGSALNWREQEGKEVWDYVTVREDARMFWWLYYATNPCKNFSELPLVMWLQGGPGGSSTGFGNFEEIGPLDTRLKPRNTTWLQWASLLFVDNPVGTGFSYVNTTDAYAKDLDTVASDMMVLLKSFFDCHKEFQTVPFYIFSESYGGKMAAGISLELHKAIQQGTIKCNFSGVALGDSWISPVDSVLSWGPYLYSVSLLDNKGLAEVSDIAEQVLNAVNKGFYKEATQLWGKAEMIIEKNTDGVNFYNILTKSTPDTSMESSLEFFRSPLVRLCQRHVRHLQGDALSQLMNGPIKKKLKIIPDDVSWGAQSSSVFISMEEDFMKPVIDIVDTLLELGVNVTVYNGQLDLIVDTIGQESWVQKLKWPQLSRFNQLKWKALYTNPKSSETSAFVKSYENLAFYWILKAGHMVPADQGDMALKMMRLVTQQE.

A signal peptide spans 1 to 28; it reads MELSRRICLVRLWLLLLSFLLGFSAGSA. 3 N-linked (GlcNAc...) asparagine glycosylation sites follow: Asn-64, Asn-102, and Asn-126. Ser-167 is an active-site residue. Asn-192 and Asn-362 each carry an N-linked (GlcNAc...) asparagine glycan. Catalysis depends on residues Asp-371 and His-431.

The protein belongs to the peptidase S10 family. As to expression, highly expressed in aorta, bladder, and kidney with much lower levels in all other tissues analyzed. Expression in kidney is restricted to proximal convoluted tubules.

The protein resides in the secreted. May be involved in vascular wall and kidney homeostasis. This is Retinoid-inducible serine carboxypeptidase (Scpep1) from Rattus norvegicus (Rat).